The primary structure comprises 74 residues: ATP synthase subunit 9, mitochondrial (74 aa).

The next 2 helical transmembrane spans lie at 8 to 28 (MGAG…GNVF) and 50 to 70 (ILGF…AFLI).

It belongs to the ATPase C chain family. In terms of assembly, F-type ATPases have 2 components, CF(1) - the catalytic core - and CF(0) - the membrane proton channel. CF(1) has five subunits: alpha(3), beta(3), gamma(1), delta(1), epsilon(1). CF(0) has three main subunits: a, b and c.

The protein localises to the mitochondrion membrane. In terms of biological role, this protein is one of the chains of the nonenzymatic membrane component (F0) of mitochondrial ATPase. The protein is ATP synthase subunit 9, mitochondrial (ATP9) of Solanum lycopersicum (Tomato).